Reading from the N-terminus, the 352-residue chain is DNA-directed RNA polymerase subunit alpha (352 aa).

Residues 1–236 are alpha N-terminal domain (alpha-NTD); the sequence is MTVNIRNWQE…DQLQVFVHFE (236 aa). The segment at 257 to 352 is alpha C-terminal domain (alpha-CTD); it reads SDVNQLNRFL…AKKLEQELLG (96 aa).

It belongs to the RNA polymerase alpha chain family. In terms of assembly, homodimer. The RNAP catalytic core consists of 2 alpha, 1 beta, 1 beta' and 1 omega subunit. When a sigma factor is associated with the core the holoenzyme is formed, which can initiate transcription.

It catalyses the reaction RNA(n) + a ribonucleoside 5'-triphosphate = RNA(n+1) + diphosphate. Its function is as follows. DNA-dependent RNA polymerase catalyzes the transcription of DNA into RNA using the four ribonucleoside triphosphates as substrates. In Sphingopyxis alaskensis (strain DSM 13593 / LMG 18877 / RB2256) (Sphingomonas alaskensis), this protein is DNA-directed RNA polymerase subunit alpha.